A 527-amino-acid polypeptide reads, in one-letter code: Metal transporter Nramp6 (527 aa).

12 consecutive transmembrane segments (helical) span residues 38–58 (FFSY…PGNF), 71–91 (ELLW…SLAA), 115–135 (FMLW…EVIG), 143–163 (LFNI…LILL), 173–193 (LEFL…VELH), 221–241 (ISLL…ALVL), 264–284 (GLAL…SGAV), 321–341 (LFAI…TYAG), 364–384 (CLAI…GAGK), 385–405 (LIII…VPLL), 427–447 (TWII…SSFI), and 458–478 (VAIV…LAAI).

It belongs to the NRAMP (TC 2.A.55) family. In terms of tissue distribution, expressed in the vascular bundles of shoots, cotyledons, young leaves, sepals and petals, at the top of the flower stem and in the style. Expressed in the peduncle of developing siliques as well as in the septum and the funiculi.

It is found in the endomembrane system. Probable intracellular cadmium (Cd) transporter that participates in the distribution or availability of Cd within the cell. This Arabidopsis thaliana (Mouse-ear cress) protein is Metal transporter Nramp6 (NRAMP6).